A 217-amino-acid chain; its full sequence is Cytidylate kinase (217 aa).

ATP is bound at residue 10-18; the sequence is GPAGAGKST.

It belongs to the cytidylate kinase family. Type 1 subfamily.

Its subcellular location is the cytoplasm. The catalysed reaction is CMP + ATP = CDP + ADP. It carries out the reaction dCMP + ATP = dCDP + ADP. In Clostridium botulinum (strain ATCC 19397 / Type A), this protein is Cytidylate kinase.